The following is a 496-amino-acid chain: Glutamate--cysteine ligase B, chloroplastic (496 aa).

The transit peptide at 1 to 34 (MAVASRLAVARVAPDGGAAGRRRRRRGRPVVAVP) directs the protein to the chloroplast. The segment at 14 to 53 (PDGGAAGRRRRRRGRPVVAVPTAAGRGRGRGGAVAASPPT) is disordered. A compositionally biased stretch (low complexity) spans 29 to 38 (PVVAVPTAAG). Cys160 and Cys380 are joined by a disulfide.

This sequence belongs to the carboxylate-amine ligase family. Glutamate--cysteine ligase type 2 subfamily. In terms of assembly, homodimer or monomer when oxidized or reduced, respectively. Post-translationally, the Cys-160-Cys-380 disulfide bridge is known to modulate the enzyme activity according to the redox status. The oxidized form constitutes the active enzyme.

It is found in the plastid. The protein resides in the chloroplast. It catalyses the reaction L-cysteine + L-glutamate + ATP = gamma-L-glutamyl-L-cysteine + ADP + phosphate + H(+). It functions in the pathway sulfur metabolism; glutathione biosynthesis; glutathione from L-cysteine and L-glutamate: step 1/2. This chain is Glutamate--cysteine ligase B, chloroplastic (GSH1-2), found in Oryza sativa subsp. japonica (Rice).